The chain runs to 307 residues: uncharacterized protein (307 aa).

The HTH lysR-type domain occupies 11 to 68 (IRLRHLHTFVAVAQQGTLGRAAETLNLSQPALSKTLNELEQLTGARLFERGRQGAQLT). Positions 28–47 (LGRAAETLNLSQPALSKTLN) form a DNA-binding region, H-T-H motif.

This sequence belongs to the LysR transcriptional regulatory family.

This is an uncharacterized protein from Escherichia coli (strain K12).